Reading from the N-terminus, the 423-residue chain is Serine--tRNA ligase (423 aa).

229–231 (TAE) provides a ligand contact to L-serine. Position 260-262 (260-262 (RRE)) interacts with ATP. Glu283 provides a ligand contact to L-serine. Position 347 to 350 (347 to 350 (EISS)) interacts with ATP. Ser383 contributes to the L-serine binding site.

It belongs to the class-II aminoacyl-tRNA synthetase family. Type-1 seryl-tRNA synthetase subfamily. In terms of assembly, homodimer. The tRNA molecule binds across the dimer.

It is found in the cytoplasm. The enzyme catalyses tRNA(Ser) + L-serine + ATP = L-seryl-tRNA(Ser) + AMP + diphosphate + H(+). It carries out the reaction tRNA(Sec) + L-serine + ATP = L-seryl-tRNA(Sec) + AMP + diphosphate + H(+). It functions in the pathway aminoacyl-tRNA biosynthesis; selenocysteinyl-tRNA(Sec) biosynthesis; L-seryl-tRNA(Sec) from L-serine and tRNA(Sec): step 1/1. Functionally, catalyzes the attachment of serine to tRNA(Ser). Is also able to aminoacylate tRNA(Sec) with serine, to form the misacylated tRNA L-seryl-tRNA(Sec), which will be further converted into selenocysteinyl-tRNA(Sec). The protein is Serine--tRNA ligase of Trichlorobacter lovleyi (strain ATCC BAA-1151 / DSM 17278 / SZ) (Geobacter lovleyi).